The primary structure comprises 502 residues: Chromatin structure-remodeling complex protein RSC58 (502 aa).

One can recognise a Bromo domain in the interval 19-134 (SILNAASVKC…KFSSELLLRE (116 aa)). Positions 336-378 (NEEGINRKQNDENNKNVDGKSNGVQDDGGDNDNDATIASANSE) are disordered. The segment covering 339–353 (GINRKQNDENNKNVD) has biased composition (basic and acidic residues).

In terms of assembly, component of the two forms of the RSC complex composed of at least either RSC1 or RSC2, and ARP7, ARP9, LDB7, NPL6, RSC3, RSC30, RSC4, RSC58, RSC6, RSC8, RSC9, SFH1, STH1, HTL1 and probably RTT102. The complexes interact with histone and histone variant components of centromeric chromatin.

The protein localises to the nucleus. In terms of biological role, component of the chromatin structure-remodeling complex (RSC), which is involved in transcription regulation and nucleosome positioning. RSC is responsible for the transfer of a histone octamer from a nucleosome core particle to naked DNA. The reaction requires ATP and involves an activated RSC-nucleosome intermediate. Remodeling reaction also involves DNA translocation, DNA twist and conformational change. As a reconfigurer of centromeric and flanking nucleosomes, RSC complex is required both for proper kinetochore function in chromosome segregation and, via a PKC1-dependent signaling pathway, for organization of the cellular cytoskeleton. The protein is Chromatin structure-remodeling complex protein RSC58 (RSC58) of Saccharomyces cerevisiae (strain ATCC 204508 / S288c) (Baker's yeast).